Reading from the N-terminus, the 383-residue chain is Putative glutamate--cysteine ligase 2-2 (383 aa).

It belongs to the glutamate--cysteine ligase type 2 family. YbdK subfamily.

It carries out the reaction L-cysteine + L-glutamate + ATP = gamma-L-glutamyl-L-cysteine + ADP + phosphate + H(+). In terms of biological role, ATP-dependent carboxylate-amine ligase which exhibits weak glutamate--cysteine ligase activity. The chain is Putative glutamate--cysteine ligase 2-2 from Paenarthrobacter aurescens (strain TC1).